The chain runs to 91 residues: MKITDVRVRKLNDEGRMKAVVSVTFDNEFVVHDIKVIEGQNGLFIAMPSRKTPEGEFKDIAHPINSDTRNKLQKAILEEYEKAKENNSNKE.

The protein belongs to the SpoVG family.

Its function is as follows. Could be involved in septation. The polypeptide is Putative septation protein SpoVG (Caldanaerobacter subterraneus subsp. tengcongensis (strain DSM 15242 / JCM 11007 / NBRC 100824 / MB4) (Thermoanaerobacter tengcongensis)).